Consider the following 109-residue polypeptide: uncharacterized protein (109 aa).

3 helical membrane-spanning segments follow: residues 16-36 (HPHLGISFIGCLLAITLEIYF), 52-72 (LIVLLVINMVTIPVVMALIAL), and 87-107 (ILLCLLSCILTIAGLFIAYPV).

The protein localises to the cell membrane. This is an uncharacterized protein from Salmonella typhimurium (strain LT2 / SGSC1412 / ATCC 700720).